The chain runs to 368 residues: S-adenosylmethionine decarboxylase proenzyme (368 aa).

Catalysis depends on residues Glu26 and Glu29. Ser83 acts as the Schiff-base intermediate with substrate; via pyruvic acid in catalysis. Pyruvic acid (Ser); by autocatalysis is present on Ser83. Cys97 (proton donor; for catalytic activity) is an active-site residue. Catalysis depends on proton acceptor; for processing activity residues Ser246 and His261.

This sequence belongs to the eukaryotic AdoMetDC family. As to quaternary structure, heterotetramer of two alpha and two beta chains. Requires pyruvate as cofactor. Is synthesized initially as an inactive proenzyme. Formation of the active enzyme involves a self-maturation process in which the active site pyruvoyl group is generated from an internal serine residue via an autocatalytic post-translational modification. Two non-identical subunits are generated from the proenzyme in this reaction, and the pyruvate is formed at the N-terminus of the alpha chain, which is derived from the carboxyl end of the proenzyme. The post-translation cleavage follows an unusual pathway, termed non-hydrolytic serinolysis, in which the side chain hydroxyl group of the serine supplies its oxygen atom to form the C-terminus of the beta chain, while the remainder of the serine residue undergoes an oxidative deamination to produce ammonia and the pyruvoyl group blocking the N-terminus of the alpha chain.

The catalysed reaction is S-adenosyl-L-methionine + H(+) = S-adenosyl 3-(methylsulfanyl)propylamine + CO2. It participates in amine and polyamine biosynthesis; S-adenosylmethioninamine biosynthesis; S-adenosylmethioninamine from S-adenosyl-L-methionine: step 1/1. Essential for biosynthesis of the polyamines spermidine and spermine. Polyamines are essential for cell proliferation and are implicated in cellular processes, ranging from DNA replication to apoptosis. The chain is S-adenosylmethionine decarboxylase proenzyme from Caenorhabditis elegans.